Reading from the N-terminus, the 152-residue chain is Protein X (152 aa).

A mitochondrial targeting sequence region spans residues P68–F115.

It belongs to the orthohepadnavirus protein X family. May form homodimer. May interact with host CEBPA, CFLAR, CREB1, DDB1, E4F1, HBXIP, HSPD1/HSP60, NFKBIA, POLR2E and SMAD4. Interacts with host SMC5-SMC6 complex and induces its degradation. Interacts with host TRPC4AP; leading to prevent ubiquitination of TRPC4AP. Interacts with host PLSCR1; this interaction promotes ubiquitination and degradation of HBx and impairs HBx-mediated cell proliferation. In terms of processing, a fraction may be phosphorylated in insect cells and HepG2 cells, a human hepatoblastoma cell line. Phosphorylated in vitro by host protein kinase C or mitogen-activated protein kinase. N-acetylated in insect cells.

The protein localises to the host cytoplasm. It is found in the host nucleus. The protein resides in the host mitochondrion. Multifunctional protein that plays a role in silencing host antiviral defenses and promoting viral transcription. Does not seem to be essential for HBV infection. May be directly involved in development of cirrhosis and liver cancer (hepatocellular carcinoma). Most of cytosolic activities involve modulation of cytosolic calcium. The effect on apoptosis is controversial depending on the cell types in which the studies have been conducted. May induce apoptosis by localizing in mitochondria and causing loss of mitochondrial membrane potential. May also modulate apoptosis by binding host CFLAR, a key regulator of the death-inducing signaling complex (DISC). Promotes viral transcription by using the host E3 ubiquitin ligase DDB1 to target the SMC5-SMC6 complex to proteasomal degradation. This host complex would otherwise bind to viral episomal DNA, and prevents its transcription. Moderately stimulates transcription of many different viral and cellular transcription elements. Promoters and enhancers stimulated by HBx contain DNA binding sites for NF-kappa-B, AP-1, AP-2, c-EBP, ATF/CREB, or the calcium-activated factor NF-AT. In Lagothrix lagotricha (Brown woolly monkey), this protein is Protein X.